Reading from the N-terminus, the 116-residue chain is G antigen 2A (116 aa).

The interval 1 to 116 is disordered; that stretch reads MSWRGRSTYR…PEEGEKQSQC (116 aa). 2 stretches are compositionally biased toward acidic residues: residues 31–44 and 86–95; these read FSDE…EEGE and ECEDGPDGQE. Basic and acidic residues predominate over residues 102–116; the sequence is EEVKTPEEGEKQSQC.

The protein belongs to the GAGE family.

This chain is G antigen 2A (GAGE2A), found in Homo sapiens (Human).